The chain runs to 435 residues: MAAHLLPICTLFLNLLSVAQGSRDPVVLNRPFTTIWNANTQWCLKRHGVDVDVSVFEVVVNPGQTFRGPNMTIFYSSQLGTYPYYTSAGEPVFGGLPQNASLDVHLNRTFKDILAAMPESNFSGLAVIDWEAWRPRWAFNWDAKDIYRQRSRALVQKQHPDWPAPWVEAAAQDQFQEAAQTWMAGTLKLGQTLRPHGLWGFYGFPDCYNYDFQSSNYTGQCPPGVSAQNDQLGWLWGQSRALYPSIYLPSALEGTNKTQLYVQHRVNEAFRVAAAAGDPNLPVLPYAQIFHDMTNRLLSREELEHSLGESAAQGAAGVVLWVSWENTRTKESCQSIKEYVDTTLGPFILNVTSGALLCSQAVCSGHGRCVRRPSHTEALPILNPSSFSIKPTPGGGPLTLQGALSLKDRVQMAEEFQCRCYPGWRGTWCEQQGTR.

An N-terminal signal peptide occupies residues 1–21 (MAAHLLPICTLFLNLLSVAQG). Intrachain disulfides connect Cys-43–Cys-333 and Cys-207–Cys-221. N-linked (GlcNAc...) asparagine glycans are attached at residues Asn-70, Asn-99, Asn-107, and Asn-121. Glu-131 acts as the Proton donor in catalysis. N-linked (GlcNAc...) asparagine glycosylation is found at Asn-216, Asn-256, and Asn-350. Intrachain disulfides connect Cys-358–Cys-369, Cys-363–Cys-418, and Cys-420–Cys-429. Residues 418–429 (CRCYPGWRGTWC) enclose the EGF-like domain.

The protein belongs to the glycosyl hydrolase 56 family. In terms of tissue distribution, highly expressed in spleen, kidney, and lung.

The protein localises to the secreted. It is found in the lysosome. The catalysed reaction is Random hydrolysis of (1-&gt;4)-linkages between N-acetyl-beta-D-glucosamine and D-glucuronate residues in hyaluronate.. Functionally, may have a role in promoting tumor progression. May block the TGFB1-enhanced cell growth. The sequence is that of Hyaluronidase-1 (HYAL1) from Sus scrofa (Pig).